Here is a 73-residue protein sequence, read N- to C-terminus: IVGGRPARPHAWPFMASLQRRGGHFCGATLIMGWGQLGTNRPLPSVLQELNVTVVTAGICFGDSGGPLVCNGL.

The region spanning 1-73 (IVGGRPARPH…SGGPLVCNGL (73 aa)) is the Peptidase S1 domain. Catalysis depends on S64, which acts as the Charge relay system.

The protein belongs to the peptidase S1 family. Elastase subfamily.

In terms of biological role, may be involved in the degradation of connective tissue in chronic lung disease. This chain is Neutrophil elastase 2B, found in Equus caballus (Horse).